The following is a 406-amino-acid chain: Probable endo-xylogalacturonan hydrolase A (406 aa).

The N-terminal stretch at 1–18 (MISLNSIFLLSLVGLSRA) is a signal peptide. Residues 20–49 (PSRSETSPDRTIKPRAACTPTAGGSSSTDD) form a disordered region. PbH1 repeat units follow at residues 183–213 (TSNA…DIGA), 214–235 (STYV…AFKP), 237–257 (ANYV…SVGS), 266–289 (VQNV…KTYP), 299–320 (VKNA…QIQS), and 368–390 (TCDV…ILCG). The active-site Proton donor is Asp228. The N-linked (GlcNAc...) asparagine glycan is linked to Asn244. His251 is a catalytic residue. 3 N-linked (GlcNAc...) asparagine glycosylation sites follow: Asn273, Asn278, and Asn301.

Belongs to the glycosyl hydrolase 28 family.

Its subcellular location is the secreted. In terms of biological role, pectinolytic enzyme involved in the degradation of xylogalacturonan (xga), a galacturonan backbone heavily substituted with xylose, and which is one important component of the hairy regions of pectin. Activity requires a galacturonic acid backbone substituted with xylose. The chain is Probable endo-xylogalacturonan hydrolase A (xghA) from Aspergillus oryzae (strain ATCC 42149 / RIB 40) (Yellow koji mold).